A 379-amino-acid polypeptide reads, in one-letter code: MTTNQQNAVVSQPQTVVVKLGTSVLTGGTLALDRAHMVELARQCAELKKQGHSVVMVSSGAIAAGREHLGYPALPNEMASKQLLAAVGQSRLIQTWESLFGIYGIKIGQMLLTRADLDDRERFLNARDTINALVANDIIPIVNENDAVATSEIKVGDNDNLSALVGILCGADKLLLLTDQKGLFTADPRKDPNAELIKEVKTIDDTLRKIAGGSGTTLGTGGMATKLQAADIARRAGIEVIIAAGSAPNVIFDSLSTEPQGTRFLPCSEALENRKRWILAGPAASGDIIIDDGAVNAVVGKGSSLLAKGVIKVSGDFARGEVARVTNSHGKLVARGISAYSSEDLAKITGKHSKDIISILGHDYGSEVIHRDDLVVIQE.

K19 lines the ATP pocket. Residues S59, D146, and N158 each coordinate substrate. ATP is bound by residues 178–179 and 220–226; these read TD and TGGMATK. In terms of domain architecture, PUA spans 285-363; sequence SGDIIIDDGA…KDIISILGHD (79 aa).

It belongs to the glutamate 5-kinase family.

The protein resides in the cytoplasm. It catalyses the reaction L-glutamate + ATP = L-glutamyl 5-phosphate + ADP. It participates in amino-acid biosynthesis; L-proline biosynthesis; L-glutamate 5-semialdehyde from L-glutamate: step 1/2. Functionally, catalyzes the transfer of a phosphate group to glutamate to form L-glutamate 5-phosphate. This is Glutamate 5-kinase from Vibrio parahaemolyticus serotype O3:K6 (strain RIMD 2210633).